The sequence spans 321 residues: Lipoyl synthase (321 aa).

Positions 68, 73, 79, 94, 98, 101, and 308 each coordinate [4Fe-4S] cluster. A Radical SAM core domain is found at 80–297; sequence FNHGTATFMI…KAEAMAMGFT (218 aa).

This sequence belongs to the radical SAM superfamily. Lipoyl synthase family. Requires [4Fe-4S] cluster as cofactor.

The protein localises to the cytoplasm. The catalysed reaction is [[Fe-S] cluster scaffold protein carrying a second [4Fe-4S](2+) cluster] + N(6)-octanoyl-L-lysyl-[protein] + 2 oxidized [2Fe-2S]-[ferredoxin] + 2 S-adenosyl-L-methionine + 4 H(+) = [[Fe-S] cluster scaffold protein] + N(6)-[(R)-dihydrolipoyl]-L-lysyl-[protein] + 4 Fe(3+) + 2 hydrogen sulfide + 2 5'-deoxyadenosine + 2 L-methionine + 2 reduced [2Fe-2S]-[ferredoxin]. It participates in protein modification; protein lipoylation via endogenous pathway; protein N(6)-(lipoyl)lysine from octanoyl-[acyl-carrier-protein]: step 2/2. Functionally, catalyzes the radical-mediated insertion of two sulfur atoms into the C-6 and C-8 positions of the octanoyl moiety bound to the lipoyl domains of lipoate-dependent enzymes, thereby converting the octanoylated domains into lipoylated derivatives. The protein is Lipoyl synthase of Yersinia enterocolitica serotype O:8 / biotype 1B (strain NCTC 13174 / 8081).